The sequence spans 158 residues: S-ribosylhomocysteine lyase (158 aa).

Residues histidine 54, histidine 58, and cysteine 124 each contribute to the Fe cation site.

This sequence belongs to the LuxS family. Homodimer. The cofactor is Fe cation.

The catalysed reaction is S-(5-deoxy-D-ribos-5-yl)-L-homocysteine = (S)-4,5-dihydroxypentane-2,3-dione + L-homocysteine. In terms of biological role, involved in the synthesis of autoinducer 2 (AI-2) which is secreted by bacteria and is used to communicate both the cell density and the metabolic potential of the environment. The regulation of gene expression in response to changes in cell density is called quorum sensing. Catalyzes the transformation of S-ribosylhomocysteine (RHC) to homocysteine (HC) and 4,5-dihydroxy-2,3-pentadione (DPD). The sequence is that of S-ribosylhomocysteine lyase from Lactiplantibacillus plantarum (strain ATCC BAA-793 / NCIMB 8826 / WCFS1) (Lactobacillus plantarum).